A 74-amino-acid polypeptide reads, in one-letter code: Lambda-hexatoxin-Hv1e (74 aa).

A signal peptide spans 1-22; that stretch reads MNTATCFIVLLVVATVIGGIEA. Residues 23-35 constitute a propeptide that is removed on maturation; that stretch reads GEFDMRKDVMGLF. 4 disulfides stabilise this stretch: C40–C54, C47–C59, C50–C51, and C53–C69.

Belongs to the neurotoxin 11 (kappa toxin) family. In terms of tissue distribution, expressed by the venom gland.

It is found in the secreted. Its function is as follows. This excitatory toxin inhibits insect calcium-activated potassium (KCa) channels (Slo-type). In Hadronyche versuta (Blue mountains funnel-web spider), this protein is Lambda-hexatoxin-Hv1e.